Consider the following 932-residue polypeptide: Protein translocase subunit SecA (932 aa).

Residues Gln-87, 105–109 (GEGKT), and Asp-515 each bind ATP. Cys-916, Cys-918, Cys-927, and His-928 together coordinate Zn(2+).

The protein belongs to the SecA family. In terms of assembly, monomer and homodimer. Part of the essential Sec protein translocation apparatus which comprises SecA, SecYEG and auxiliary proteins SecDF-YajC and YidC. The cofactor is Zn(2+).

It is found in the cell inner membrane. It localises to the cytoplasm. It catalyses the reaction ATP + H2O + cellular proteinSide 1 = ADP + phosphate + cellular proteinSide 2.. In terms of biological role, part of the Sec protein translocase complex. Interacts with the SecYEG preprotein conducting channel. Has a central role in coupling the hydrolysis of ATP to the transfer of proteins into and across the cell membrane, serving both as a receptor for the preprotein-SecB complex and as an ATP-driven molecular motor driving the stepwise translocation of polypeptide chains across the membrane. This Burkholderia orbicola (strain AU 1054) protein is Protein translocase subunit SecA.